The following is a 155-amino-acid chain: Protein-export protein SecB (155 aa).

The protein belongs to the SecB family. As to quaternary structure, homotetramer, a dimer of dimers. One homotetramer interacts with 1 SecA dimer.

Its subcellular location is the cytoplasm. Functionally, one of the proteins required for the normal export of preproteins out of the cell cytoplasm. It is a molecular chaperone that binds to a subset of precursor proteins, maintaining them in a translocation-competent state. It also specifically binds to its receptor SecA. In Salmonella heidelberg (strain SL476), this protein is Protein-export protein SecB.